The following is a 171-amino-acid chain: Synaptonemal complex central element protein 2 (171 aa).

The disordered stretch occupies residues 1–52; that stretch reads MERHGVAAPPVELKDQEPPAIVESGEHRQSENHEETPGSVAPSASCQLPGPF. Residues 24–36 show a composition bias toward basic and acidic residues; the sequence is SGEHRQSENHEET. Coiled-coil stretches lie at residues 52–83 and 118–146; these read FSSL…DHAL and QERL…QTVE.

Belongs to the SYCE family. In terms of assembly, homodimer. Found in a complex with SYCP1 and SYCE1. Interacts with SYCP1 and SYCE1. Interacts with SYCE3. Interacts with TEX12. In terms of tissue distribution, meiotic cells (at protein level). Expressed in the ovary and testis.

The protein resides in the nucleus. The protein localises to the chromosome. Its function is as follows. Major component of the transverse central element of synaptonemal complexes (SCS), formed between homologous chromosomes during meiotic prophase. Requires SYCP1 in order to be incorporated into the central element. May have a role in the synaptonemal complex assembly, stabilization and recombination. This is Synaptonemal complex central element protein 2 (Syce2) from Mus musculus (Mouse).